The primary structure comprises 272 residues: HMP-PP phosphatase (272 aa).

Residue Asp8 is the Nucleophile of the active site. Mg(2+)-binding residues include Asp8, Asp10, and Asp212.

The protein belongs to the HAD-like hydrolase superfamily. Cof family. The cofactor is Mg(2+).

It catalyses the reaction 4-amino-2-methyl-5-(diphosphooxymethyl)pyrimidine + H2O = 4-amino-2-methyl-5-(phosphooxymethyl)pyrimidine + phosphate + H(+). Its function is as follows. Catalyzes the hydrolysis of 4-amino-2-methyl-5-hydroxymethylpyrimidine pyrophosphate (HMP-PP) to 4-amino-2-methyl-5-hydroxymethylpyrimidine phosphate (HMP-P). The sequence is that of HMP-PP phosphatase from Klebsiella pneumoniae (strain 342).